The following is an 84-amino-acid chain: Large ribosomal subunit protein bL31B (84 aa).

Belongs to the bacterial ribosomal protein bL31 family. Type B subfamily. In terms of assembly, part of the 50S ribosomal subunit.

This chain is Large ribosomal subunit protein bL31B, found in Parabacteroides distasonis (strain ATCC 8503 / DSM 20701 / CIP 104284 / JCM 5825 / NCTC 11152).